We begin with the raw amino-acid sequence, 347 residues long: Protein POOR HOMOLOGOUS SYNAPSIS 1 (347 aa).

It localises to the cytoplasm. Functionally, required for accurate chromosome segregation in meiosis. Required for pairing to occur between homologous chromosomes. Acts in early recombination steps and ensures pairing fidelity and proper repair of meiotic DNA double-strand-breaks. Regulates recombination and pairing of homologous chromosomes during meiotic prophase by controlling transport of RAD50 from cytoplasm to the nucleus. May affect pairing of the gene-rich fraction of the genome rather than preventing pairing between repetitive DNA elements. This is Protein POOR HOMOLOGOUS SYNAPSIS 1 from Zea mays (Maize).